The following is a 134-amino-acid chain: Fatty acid-binding protein, muscle (134 aa).

(9Z)-octadecenoate is bound by residues Arg-109 and 129 to 131 (RIY).

It belongs to the calycin superfamily. Fatty-acid binding protein (FABP) family. In terms of assembly, monomer. In terms of tissue distribution, adult flight muscle.

The protein localises to the cytoplasm. Its function is as follows. Binds fatty acids in a 1:1 molar ratio. The polypeptide is Fatty acid-binding protein, muscle (Schistocerca gregaria (Desert locust)).